A 157-amino-acid chain; its full sequence is UPF0262 protein RL0614 (157 aa).

Belongs to the UPF0262 family.

This Rhizobium johnstonii (strain DSM 114642 / LMG 32736 / 3841) (Rhizobium leguminosarum bv. viciae) protein is UPF0262 protein RL0614.